The primary structure comprises 360 residues: Vomilenine reductase (360 aa).

The 329-residue stretch at 23–351 folds into the Enoyl reductase (ER) domain; it reads GLLSPFNFSR…KADVKYRFVI (329 aa). A Zn(2+)-binding site is contributed by Cys-50. Position 52 (Ser-52) interacts with an alcohol. NADP(+) is bound at residue Ser-52. Zn(2+) contacts are provided by Asp-53, His-72, Glu-73, Cys-103, Cys-106, Cys-109, Cys-117, and Cys-166. Position 72 (His-72) interacts with an alcohol. NADP(+) is bound by residues Leu-192, Gly-194, Leu-195, Ser-214, Thr-215, Ser-216, Lys-219, Lys-220, Val-277, Ala-279, Ser-301, and Arg-348.

Belongs to the zinc-containing alcohol dehydrogenase family. Class-P subfamily. In terms of assembly, homodimer. Zn(2+) is required as a cofactor. Confined to roots.

Its subcellular location is the cytoplasm. The catalysed reaction is (2R)-1,2-dihydrovomilenine + NADP(+) = vomilenine + NADPH + H(+). Its pathway is alkaloid biosynthesis; ajmaline biosynthesis. Its activity is regulated as follows. Inhibited by EDTA and p-hydroxymercuribenzoate, a sulfhydryl reagent. In terms of biological role, alcohol dehydrogenase involved in the biosynthesis of ajmaline-type monoterpenoid indole alkaloids (MIAs) natural products, important plant-derived pharmaceuticals used in the therapy of heart disorders. Catalyzes the conversion of vomilenine to 1,2-dihydrovomilenine, an intermediate chemical in the biosynthesis of ajmaline. This Rauvolfia serpentina (Serpentine wood) protein is Vomilenine reductase.